Here is a 503-residue protein sequence, read N- to C-terminus: Glutamate--tRNA ligase (503 aa).

Positions 26–36 match the 'HIGH' region motif; it reads PSPTGTPHVGL. The disordered stretch occupies residues 126-148; sequence TPEEVEARHRAAGRDPKLGYDNA. Residues 130-148 are compositionally biased toward basic and acidic residues; sequence VEARHRAAGRDPKLGYDNA. Residues 270–274 carry the 'KMSKS' region motif; that stretch reads KLSKR. An ATP-binding site is contributed by Lys-273.

The protein belongs to the class-I aminoacyl-tRNA synthetase family. Glutamate--tRNA ligase type 1 subfamily. In terms of assembly, monomer.

It is found in the cytoplasm. It carries out the reaction tRNA(Glu) + L-glutamate + ATP = L-glutamyl-tRNA(Glu) + AMP + diphosphate. Catalyzes the attachment of glutamate to tRNA(Glu) in a two-step reaction: glutamate is first activated by ATP to form Glu-AMP and then transferred to the acceptor end of tRNA(Glu). The polypeptide is Glutamate--tRNA ligase (Saccharopolyspora erythraea (strain ATCC 11635 / DSM 40517 / JCM 4748 / NBRC 13426 / NCIMB 8594 / NRRL 2338)).